A 186-amino-acid chain; its full sequence is Imidazoleglycerol-phosphate dehydratase (186 aa).

Belongs to the imidazoleglycerol-phosphate dehydratase family.

It localises to the cytoplasm. It carries out the reaction D-erythro-1-(imidazol-4-yl)glycerol 3-phosphate = 3-(imidazol-4-yl)-2-oxopropyl phosphate + H2O. It participates in amino-acid biosynthesis; L-histidine biosynthesis; L-histidine from 5-phospho-alpha-D-ribose 1-diphosphate: step 6/9. The sequence is that of Imidazoleglycerol-phosphate dehydratase from Pyrobaculum aerophilum (strain ATCC 51768 / DSM 7523 / JCM 9630 / CIP 104966 / NBRC 100827 / IM2).